Here is a 186-residue protein sequence, read N- to C-terminus: Peptidyl-tRNA hydrolase (186 aa).

Residue Y14 coordinates tRNA. H19 serves as the catalytic Proton acceptor. TRNA contacts are provided by F64, N66, and N112.

This sequence belongs to the PTH family. In terms of assembly, monomer.

The protein resides in the cytoplasm. It catalyses the reaction an N-acyl-L-alpha-aminoacyl-tRNA + H2O = an N-acyl-L-amino acid + a tRNA + H(+). Hydrolyzes ribosome-free peptidyl-tRNAs (with 1 or more amino acids incorporated), which drop off the ribosome during protein synthesis, or as a result of ribosome stalling. Functionally, catalyzes the release of premature peptidyl moieties from peptidyl-tRNA molecules trapped in stalled 50S ribosomal subunits, and thus maintains levels of free tRNAs and 50S ribosomes. The protein is Peptidyl-tRNA hydrolase of Listeria monocytogenes serotype 4b (strain CLIP80459).